A 224-amino-acid polypeptide reads, in one-letter code: tRNA (guanine-N(7)-)-methyltransferase (224 aa).

The S-adenosyl-L-methionine site is built by E56, E81, D108, and D131. Residue D131 is part of the active site. Substrate is bound by residues K135, D167, and T202–E205.

It belongs to the class I-like SAM-binding methyltransferase superfamily. TrmB family.

The enzyme catalyses guanosine(46) in tRNA + S-adenosyl-L-methionine = N(7)-methylguanosine(46) in tRNA + S-adenosyl-L-homocysteine. The protein operates within tRNA modification; N(7)-methylguanine-tRNA biosynthesis. Its function is as follows. Catalyzes the formation of N(7)-methylguanine at position 46 (m7G46) in tRNA. This chain is tRNA (guanine-N(7)-)-methyltransferase, found in Nitrosomonas europaea (strain ATCC 19718 / CIP 103999 / KCTC 2705 / NBRC 14298).